We begin with the raw amino-acid sequence, 309 residues long: Malate dehydrogenase (309 aa).

Residues 9–14 (GAGFVG) and Asp-33 contribute to the NAD(+) site. The substrate site is built by Arg-82 and Arg-88. Residues Asn-95 and 118 to 120 (VNN) contribute to the NAD(+) site. 2 residues coordinate substrate: Asn-120 and Arg-151. Catalysis depends on His-175, which acts as the Proton acceptor.

This sequence belongs to the LDH/MDH superfamily. MDH type 3 family.

It catalyses the reaction (S)-malate + NAD(+) = oxaloacetate + NADH + H(+). Its function is as follows. Catalyzes the reversible oxidation of malate to oxaloacetate. In Roseiflexus sp. (strain RS-1), this protein is Malate dehydrogenase.